The sequence spans 224 residues: Octanoyltransferase (224 aa).

The BPL/LPL catalytic domain maps to 45–223; sequence PSNKQAVWML…SLNKRFGLLW (179 aa). Substrate-binding positions include 87-94, 154-156, and 167-169; these read RGGDVTHH, SIG, and GIA. Cysteine 185 serves as the catalytic Acyl-thioester intermediate.

The protein belongs to the LipB family.

The protein resides in the cytoplasm. It catalyses the reaction octanoyl-[ACP] + L-lysyl-[protein] = N(6)-octanoyl-L-lysyl-[protein] + holo-[ACP] + H(+). The protein operates within protein modification; protein lipoylation via endogenous pathway; protein N(6)-(lipoyl)lysine from octanoyl-[acyl-carrier-protein]: step 1/2. In terms of biological role, catalyzes the transfer of endogenously produced octanoic acid from octanoyl-acyl-carrier-protein onto the lipoyl domains of lipoate-dependent enzymes. Lipoyl-ACP can also act as a substrate although octanoyl-ACP is likely to be the physiological substrate. This is Octanoyltransferase from Prochlorococcus marinus (strain SARG / CCMP1375 / SS120).